A 358-amino-acid polypeptide reads, in one-letter code: E3 ubiquitin-protein ligase RNF146 (358 aa).

An RING-type zinc finger spans residues 36–74 (CAICLQTCVHPVSLPCKHVFCYLCVKGASWLGKRCALCR). Residues Lys84 and Lys94 each participate in a glycyl lysine isopeptide (Lys-Gly) (interchain with G-Cter in ubiquitin) cross-link. The WWE domain maps to 91-167 (EELKAASRGN…EHGRRRKIKR (77 aa)). Positions 107, 110, and 114 each coordinate a glycoprotein. Lys130 is covalently cross-linked (Glycyl lysine isopeptide (Lys-Gly) (interchain with G-Cter in ubiquitin)). Residues Tyr144, Gln153, Arg163, and Lys175 each coordinate a glycoprotein. Lys175 participates in a covalent cross-link: Glycyl lysine isopeptide (Lys-Gly) (interchain with G-Cter in ubiquitin). Positions 253–358 (GDNTAERSHR…PDGQCTVTEV (106 aa)) are disordered. Residues 283–297 (SIEETESDASSDSED) show a composition bias toward acidic residues. Ser289 and Ser293 each carry phosphoserine. Residues 305–322 (HSLTQQRLLVSNANQTVP) are compositionally biased toward polar residues.

Can form homooligomers. Interacts with PARsylated AXIN1, AXIN2, BLZF1, CASC3, H1-2, IPO7, LIG3, NCL, PARP1, XRCC1, XRCC5 and XRCC6. Interacts with DDB1, DHX15, IQGAP1, LRPPRC, PARP2, PRKDC, RUVBL2, TNKS1 and TNKS2. Binding often leads to interactor ubiquitination, in the presence of the appropriate E1 and E2 enzymes, and proteasomal degradation. In terms of processing, ubiquitinated; autoubiquitinated. Autoubiquitination is enhanced upon poly(ADP-ribose)-binding.

The protein resides in the cytoplasm. Its subcellular location is the cytosol. The protein localises to the nucleus. The catalysed reaction is S-ubiquitinyl-[E2 ubiquitin-conjugating enzyme]-L-cysteine + [acceptor protein]-L-lysine = [E2 ubiquitin-conjugating enzyme]-L-cysteine + N(6)-ubiquitinyl-[acceptor protein]-L-lysine.. It participates in protein modification; protein ubiquitination. In terms of biological role, E3 ubiquitin-protein ligase that specifically binds poly-ADP-ribosylated (PARsylated) proteins and mediates their ubiquitination and subsequent degradation. May regulate many important biological processes, such as cell survival and DNA damage response. Acts as an activator of the Wnt signaling pathway by mediating the ubiquitination of PARsylated AXIN1 and AXIN2, 2 key components of the beta-catenin destruction complex. Acts in cooperation with tankyrase proteins (TNKS and TNKS2), which mediate PARsylation of target proteins AXIN1, AXIN2, BLZF1, CASC3, TNKS and TNKS2. Recognizes and binds tankyrase-dependent PARsylated proteins via its WWE domain and mediates their ubiquitination, leading to their degradation. Different ubiquitin linkage types have been observed: TNKS2 undergoes ubiquitination at 'Lys-48' and 'Lys-63', while AXIN1 is only ubiquitinated at 'Lys-48'. May regulate TNKS and TNKS2 subcellular location, preventing aggregation at a centrosomal location. Neuroprotective protein. Protects the brain against N-methyl-D-aspartate (NMDA) receptor-mediated glutamate excitotoxicity and ischemia, by interfering with PAR-induced cell death, called parthanatos. Prevents nuclear translocation of AIFM1 in a PAR-binding dependent manner. Does not affect PARP1 activation. Protects against cell death induced by DNA damaging agents, such as N-methyl-N-nitro-N-nitrosoguanidine (MNNG) and rescues cells from G1 arrest. Promotes cell survival after gamma-irradiation. Facilitates DNA repair. The sequence is that of E3 ubiquitin-protein ligase RNF146 (RNF146) from Pongo abelii (Sumatran orangutan).